Here is a 122-residue protein sequence, read N- to C-terminus: Putative TLX1 neighbor protein (122 aa).

A disordered region spans residues 21 to 122 (SLLSQEAMGP…LGGGRGQRGQ (102 aa)). Positions 113-122 (LGGGRGQRGQ) are enriched in gly residues.

This is Putative TLX1 neighbor protein (TLX1NB) from Homo sapiens (Human).